The following is a 154-amino-acid chain: Ribonuclease H (154 aa).

The RNase H type-1 domain occupies 1–142; the sequence is MEKTVEIYTD…VDDLARDAAG (142 aa). Aspartate 10, glutamate 48, aspartate 70, and aspartate 134 together coordinate Mg(2+).

The protein belongs to the RNase H family. Monomer. The cofactor is Mg(2+).

The protein resides in the cytoplasm. The enzyme catalyses Endonucleolytic cleavage to 5'-phosphomonoester.. In terms of biological role, endonuclease that specifically degrades the RNA of RNA-DNA hybrids. This chain is Ribonuclease H, found in Pseudoalteromonas translucida (strain TAC 125).